Reading from the N-terminus, the 452-residue chain is Probable ECA polymerase (452 aa).

11 consecutive transmembrane segments (helical) span residues F6–F26, V37–L57, V63–G83, V118–L138, G155–L175, A181–G201, I207–W227, M228–Y248, L341–I361, Y378–A398, and V410–F430.

It belongs to the WzyE family. In terms of assembly, probably part of a complex composed of WzxE, WzyE and WzzE.

It localises to the cell inner membrane. It functions in the pathway bacterial outer membrane biogenesis; enterobacterial common antigen biosynthesis. Functionally, probably involved in the polymerization of enterobacterial common antigen (ECA) trisaccharide repeat units. The sequence is that of Probable ECA polymerase from Salmonella choleraesuis (strain SC-B67).